The following is a 229-amino-acid chain: Octanoyltransferase (229 aa).

Residues 30-223 (PDTPDTIWLV…QLQQRAQAHP (194 aa)) form the BPL/LPL catalytic domain. Substrate-binding positions include 69–76 (RGGQITYH), 141–143 (ALG), and 154–156 (GVS). Cysteine 172 acts as the Acyl-thioester intermediate in catalysis.

This sequence belongs to the LipB family.

It is found in the cytoplasm. It carries out the reaction octanoyl-[ACP] + L-lysyl-[protein] = N(6)-octanoyl-L-lysyl-[protein] + holo-[ACP] + H(+). It functions in the pathway protein modification; protein lipoylation via endogenous pathway; protein N(6)-(lipoyl)lysine from octanoyl-[acyl-carrier-protein]: step 1/2. Catalyzes the transfer of endogenously produced octanoic acid from octanoyl-acyl-carrier-protein onto the lipoyl domains of lipoate-dependent enzymes. Lipoyl-ACP can also act as a substrate although octanoyl-ACP is likely to be the physiological substrate. This chain is Octanoyltransferase, found in Ralstonia pickettii (strain 12J).